Reading from the N-terminus, the 366-residue chain is Isocitrate dehydrogenase [NAD] subunit alpha, mitochondrial (366 aa).

The transit peptide at 1 to 27 (MAGPAWISKVSRLLGAFHNPKQVTRGF) directs the protein to the mitochondrion. Lysine 77 is subject to N6-succinyllysine. Residue threonine 101 is modified to Phosphothreonine. Residues arginine 115, arginine 125, and arginine 146 each coordinate substrate. Residue lysine 223 is modified to N6-acetyllysine. The Mg(2+) site is built by aspartate 233, aspartate 257, and aspartate 261. Lysine 343 is subject to N6-acetyllysine; alternate. Lysine 343 carries the N6-succinyllysine; alternate modification. An N6-succinyllysine modification is found at lysine 350.

Belongs to the isocitrate and isopropylmalate dehydrogenases family. Heterooligomer of subunits alpha (IDH3A), beta (IDH3B), and gamma (IDH3G) in the apparent ratio of 2:1:1. The heterodimer containing one IDH3A and one IDH3B subunit and the heterodimer containing one IDH3A and one IDH3G subunit assemble into a heterotetramer (which contains two subunits of IDH3A, one of IDH3B and one of IDH3G) and further into the heterooctamer. The cofactor is Mg(2+). It depends on Mn(2+) as a cofactor.

It is found in the mitochondrion. It carries out the reaction D-threo-isocitrate + NAD(+) = 2-oxoglutarate + CO2 + NADH. With respect to regulation, the heterotetramer and the heterodimer composed of IDH3A and IDH3G subunits can be allosterically activated by citrate (CIT) or/and ADP, and the two activators can act independently or synergistically. The heterodimer composed of IDH3A and IDH3B subunits cannot be allosterically regulated and the allosteric regulation of the heterotetramer is through the IDH3G subunit and not the IDH3B subunit. The IDH3G subunit contains the allosteric site which consists of a CIT-binding site and an ADP-binding site, and the binding of CIT and ADP causes conformational changes at the allosteric site which are transmitted to the active site in the catalytic subunit (IDH3A) through a cascade of conformational changes at the heterodimer interface, leading to stabilization of the isocitrate-binding at the active site and thus activation of the enzyme. ATP can activate the heterotetramer and the heterodimer composed of IDH3A and IDH3G subunits at low concentrations but inhibits their activities at high concentrations, whereas ATP exhibits only inhibitory effect on the heterodimer composed of IDH3A and IDH3B subunits. In terms of biological role, catalytic subunit of the enzyme which catalyzes the decarboxylation of isocitrate (ICT) into alpha-ketoglutarate. The heterodimer composed of the alpha (IDH3A) and beta (IDH3B) subunits and the heterodimer composed of the alpha (IDH3A) and gamma (IDH3G) subunits, have considerable basal activity but the full activity of the heterotetramer (containing two subunits of IDH3A, one of IDH3B and one of IDH3G) requires the assembly and cooperative function of both heterodimers. This chain is Isocitrate dehydrogenase [NAD] subunit alpha, mitochondrial, found in Pongo abelii (Sumatran orangutan).